A 310-amino-acid polypeptide reads, in one-letter code: Porphobilinogen deaminase (310 aa).

Cys243 bears the S-(dipyrrolylmethanemethyl)cysteine mark.

It belongs to the HMBS family. In terms of assembly, monomer. The cofactor is dipyrromethane.

It catalyses the reaction 4 porphobilinogen + H2O = hydroxymethylbilane + 4 NH4(+). The protein operates within porphyrin-containing compound metabolism; protoporphyrin-IX biosynthesis; coproporphyrinogen-III from 5-aminolevulinate: step 2/4. Tetrapolymerization of the monopyrrole PBG into the hydroxymethylbilane pre-uroporphyrinogen in several discrete steps. This is Porphobilinogen deaminase from Methylobacillus flagellatus (strain ATCC 51484 / DSM 6875 / VKM B-1610 / KT).